The sequence spans 413 residues: Serine hydroxymethyltransferase (413 aa).

(6S)-5,6,7,8-tetrahydrofolate contacts are provided by residues leucine 117 and 121–123; that span reads GHL. Lysine 226 is modified (N6-(pyridoxal phosphate)lysine). 349–351 provides a ligand contact to (6S)-5,6,7,8-tetrahydrofolate; the sequence is SPF.

The protein belongs to the SHMT family. In terms of assembly, homodimer. Requires pyridoxal 5'-phosphate as cofactor.

It is found in the cytoplasm. The catalysed reaction is (6R)-5,10-methylene-5,6,7,8-tetrahydrofolate + glycine + H2O = (6S)-5,6,7,8-tetrahydrofolate + L-serine. Its pathway is one-carbon metabolism; tetrahydrofolate interconversion. The protein operates within amino-acid biosynthesis; glycine biosynthesis; glycine from L-serine: step 1/1. In terms of biological role, catalyzes the reversible interconversion of serine and glycine with tetrahydrofolate (THF) serving as the one-carbon carrier. This reaction serves as the major source of one-carbon groups required for the biosynthesis of purines, thymidylate, methionine, and other important biomolecules. Also exhibits THF-independent aldolase activity toward beta-hydroxyamino acids, producing glycine and aldehydes, via a retro-aldol mechanism. This is Serine hydroxymethyltransferase from Listeria monocytogenes serovar 1/2a (strain ATCC BAA-679 / EGD-e).